Consider the following 392-residue polypeptide: Nicotinate phosphoribosyltransferase (392 aa).

A Phosphohistidine; by autocatalysis modification is found at His214.

This sequence belongs to the NAPRTase family. Transiently phosphorylated on a His residue during the reaction cycle. Phosphorylation strongly increases the affinity for substrates and increases the rate of nicotinate D-ribonucleotide production. Dephosphorylation regenerates the low-affinity form of the enzyme, leading to product release.

It carries out the reaction nicotinate + 5-phospho-alpha-D-ribose 1-diphosphate + ATP + H2O = nicotinate beta-D-ribonucleotide + ADP + phosphate + diphosphate. It participates in cofactor biosynthesis; NAD(+) biosynthesis; nicotinate D-ribonucleotide from nicotinate: step 1/1. Its function is as follows. Catalyzes the synthesis of beta-nicotinate D-ribonucleotide from nicotinate and 5-phospho-D-ribose 1-phosphate at the expense of ATP. This chain is Nicotinate phosphoribosyltransferase, found in Xanthomonas axonopodis pv. citri (strain 306).